Consider the following 392-residue polypeptide: Bifunctional enzyme Fae/Hps (392 aa).

The segment at 1-161 (MFQIGEALMG…EESNKSTHAI (161 aa)) is formaldehyde-activating enzyme. His-17 (proton donor) is an active-site residue. Asp-19, Leu-48, Lys-66, Thr-68, and Gln-83 together coordinate substrate. Residues 162–392 (MGFKVTRLWD…IDQFRVMTDF (231 aa)) are 3-hexulose-6-phosphate synthase.

It in the N-terminal section; belongs to the formaldehyde-activating enzyme family. In the C-terminal section; belongs to the HPS/KGPDC family. HPS subfamily.

It carries out the reaction 5,6,7,8-tetrahydromethanopterin + formaldehyde = 5,10-methylenetetrahydromethanopterin + H2O. The enzyme catalyses D-ribulose 5-phosphate + formaldehyde = D-arabino-hex-3-ulose 6-phosphate. Its pathway is carbohydrate biosynthesis; D-ribose 5-phosphate biosynthesis. Catalyzes the condensation of formaldehyde with tetrahydromethanopterin (H(4)MPT) to 5,10-methylenetetrahydromethanopterin. In terms of biological role, catalyzes the reversible formation of ribulose-5-phosphate and formaldehyde from 3-hexulose-6-phosphate. The chain is Bifunctional enzyme Fae/Hps from Methanosarcina acetivorans (strain ATCC 35395 / DSM 2834 / JCM 12185 / C2A).